A 92-amino-acid chain; its full sequence is Large ribosomal subunit protein eL31 (92 aa).

This sequence belongs to the eukaryotic ribosomal protein eL31 family.

The protein is Large ribosomal subunit protein eL31 of Halorubrum lacusprofundi (strain ATCC 49239 / DSM 5036 / JCM 8891 / ACAM 34).